The chain runs to 207 residues: 8-oxoguanine DNA glycosylase/AP lyase (207 aa).

Catalysis depends on residues Lys-129 and Asp-147.

This sequence belongs to the type-2 OGG1 family.

The catalysed reaction is 2'-deoxyribonucleotide-(2'-deoxyribose 5'-phosphate)-2'-deoxyribonucleotide-DNA = a 3'-end 2'-deoxyribonucleotide-(2,3-dehydro-2,3-deoxyribose 5'-phosphate)-DNA + a 5'-end 5'-phospho-2'-deoxyribonucleoside-DNA + H(+). Catalyzes the excision of an oxidatively damaged form of guanine (7,8-dihydro-8-oxoguanine = 8-oxoG) from DNA. Also cleaves the DNA backbone at apurinic/apyrimidinic sites (AP sites). The chain is 8-oxoguanine DNA glycosylase/AP lyase from Thermotoga sp. (strain RQ2).